Here is a 944-residue protein sequence, read N- to C-terminus: Neutral alpha-glucosidase AB (944 aa).

An N-terminal signal peptide occupies residues Met-1 to Ala-32. Cys-41 and Cys-47 are joined by a disulfide. Ser-52 carries the post-translational modification Phosphoserine. Asn-97 carries N-linked (GlcNAc...) asparagine glycosylation. The interval Gln-181 to Ala-225 is disordered. The span at Asp-207–Ala-225 shows a compositional bias: basic and acidic residues. Residues Asp-283 and Asp-429 each coordinate substrate. Asp-542 acts as the Nucleophile in catalysis. Arg-602 contacts substrate. The active-site Proton donor is Asp-618. A disulfide bridge links Cys-633 with Cys-644. His-676 serves as a coordination point for substrate.

The protein belongs to the glycosyl hydrolase 31 family. As to quaternary structure, heterodimer of a catalytic alpha subunit (GANAB) and a beta subunit (PRKCSH). Binds glycosylated PTPRC. Contains sialylated polysaccharide chains.

It is found in the endoplasmic reticulum. Its subcellular location is the golgi apparatus. It localises to the melanosome. The catalysed reaction is N(4)-(alpha-D-Glc-(1-&gt;3)-alpha-D-Man-(1-&gt;2)-alpha-D-Man-(1-&gt;2)-alpha-D-Man-(1-&gt;3)-[alpha-D-Man-(1-&gt;2)-alpha-D-Man-(1-&gt;3)-[alpha-D-Man-(1-&gt;2)-alpha-D-Man-(1-&gt;6)]-alpha-D-Man-(1-&gt;6)]-beta-D-Man-(1-&gt;4)-beta-D-GlcNAc-(1-&gt;4)-beta-D-GlcNAc)-L-asparaginyl-[protein] + H2O = N(4)-(alpha-D-Man-(1-&gt;2)-alpha-D-Man-(1-&gt;2)-alpha-D-Man-(1-&gt;3)-[alpha-D-Man-(1-&gt;2)-alpha-D-Man-(1-&gt;3)-[alpha-D-Man-(1-&gt;2)-alpha-D-Man-(1-&gt;6)]-alpha-D-Man-(1-&gt;6)]-beta-D-Man-(1-&gt;4)-beta-D-GlcNAc-(1-&gt;4)-beta-D-GlcNAc)-L-asparaginyl-[protein] (N-glucan mannose isomer 9A1,2,3B1,2,3) + beta-D-glucose. It carries out the reaction N(4)-(alpha-D-Glc-(1-&gt;3)-alpha-D-Glc-(1-&gt;3)-alpha-D-Man-(1-&gt;2)-alpha-D-Man-(1-&gt;2)-alpha-D-Man-(1-&gt;3)-[alpha-D-Man-(1-&gt;2)-alpha-D-Man-(1-&gt;3)-[alpha-D-Man-(1-&gt;2)-alpha-D-Man-(1-&gt;6)]-alpha-D-Man-(1-&gt;6)]-beta-D-Man-(1-&gt;4)-beta-D-GlcNAc-(1-&gt;4)-beta-D-GlcNAc)-L-asparaginyl-[protein] + H2O = N(4)-(alpha-D-Glc-(1-&gt;3)-alpha-D-Man-(1-&gt;2)-alpha-D-Man-(1-&gt;2)-alpha-D-Man-(1-&gt;3)-[alpha-D-Man-(1-&gt;2)-alpha-D-Man-(1-&gt;3)-[alpha-D-Man-(1-&gt;2)-alpha-D-Man-(1-&gt;6)]-alpha-D-Man-(1-&gt;6)]-beta-D-Man-(1-&gt;4)-beta-D-GlcNAc-(1-&gt;4)-beta-D-GlcNAc)-L-asparaginyl-[protein] + beta-D-glucose. Its pathway is glycan metabolism; N-glycan metabolism. In terms of biological role, catalytic subunit of glucosidase II that cleaves sequentially the 2 innermost alpha-1,3-linked glucose residues from the Glc(2)Man(9)GlcNAc(2) oligosaccharide precursor of immature glycoproteins. Required for PKD1/Polycystin-1 and PKD2/Polycystin-2 maturation and localization to the cell surface and cilia. This chain is Neutral alpha-glucosidase AB (GANAB), found in Sus scrofa (Pig).